We begin with the raw amino-acid sequence, 425 residues long: NAC domain-containing protein 10 (425 aa).

Residues 1 to 10 (MESPDSSSGS) are compositionally biased toward polar residues. The tract at residues 1–34 (MESPDSSSGSAPPRVLRRQQQQPGSAPELPPGFR) is disordered. The span at 12–23 (PPRVLRRQQQQP) shows a compositional bias: low complexity. Residues 29 to 200 (LPPGFRFHPT…DWVLCRIYKK (172 aa)) form the NAC domain. A DNA-binding region spans residues 129–206 (VGVKKALVFY…IYKKTNKAGA (78 aa)).

As to expression, highest expression in stamens. Expressed in leaves.

It is found in the nucleus. Its function is as follows. Transcription factor of the NAC family associated with male fertility. Involved in anther development, but not in senescence. Reduced expression of NAC5 via RNAi leads to male-sterility. This Oryza sativa subsp. japonica (Rice) protein is NAC domain-containing protein 10.